The chain runs to 178 residues: MPKPTKGPRLGGSPAHERIILRNLASQLFEHGHVVTTVTKAKRVRPLAEKLINRAKTDTVANRRFVNRTITDRGIVHILFTEIGPRMEGRDGGYTRVTRIGNRKGDNAPMAVIEVISDKVAPKAPASAADAKAQINTATEAKEAEPEAPAEDAAAQAPVADEQKAAEVDEKAEEKPEA.

2 stretches are compositionally biased toward low complexity: residues 123 to 139 (KAPA…NTAT) and 151 to 160 (EDAAAQAPVA). The interval 123 to 178 (KAPASAADAKAQINTATEAKEAEPEAPAEDAAAQAPVADEQKAAEVDEKAEEKPEA) is disordered. The span at 161–178 (DEQKAAEVDEKAEEKPEA) shows a compositional bias: basic and acidic residues.

Belongs to the bacterial ribosomal protein bL17 family. Part of the 50S ribosomal subunit. Contacts protein L32.

This is Large ribosomal subunit protein bL17 from Cutibacterium acnes (strain DSM 16379 / KPA171202) (Propionibacterium acnes).